We begin with the raw amino-acid sequence, 239 residues long: MKRVLLILVTGLFMSLCGITSSVSAQTGGSFFEPFNSYNSGLWQKADGYSNGDMFNCTWRANNVSMTSLGEMRLALTSPSYNKFDCGENRSVQTYGYGLYEVRMKPAKNTGIVSSFFTYTGPTEGTPWDEIDIEFLGKDTTKVQFNYYTNGAGNHEKFADLGFDAANAYHTYAFDWQPNSIKWYVDGQLKHTATTQIPAAPGKIMMNLWNGTGVDDWLGSYNGVNPIYAHYDWMRYRKK.

A signal peptide spans Met1–Ala25. The 214-residue stretch at Gln26–Lys239 folds into the GH16 domain. Cys57 and Cys86 form a disulfide bridge. The active-site Nucleophile is Glu134.

This sequence belongs to the glycosyl hydrolase 16 family.

It catalyses the reaction Hydrolysis of (1-&gt;4)-beta-D-glucosidic linkages in beta-D-glucans containing (1-&gt;3)- and (1-&gt;4)-bonds.. This chain is Beta-glucanase (bglA), found in Bacillus amyloliquefaciens (Bacillus velezensis).